The following is a 140-amino-acid chain: uncharacterized protein (140 aa).

Belongs to the asfivirus D129L family.

This is an uncharacterized protein from African swine fever virus (isolate Pig/Kenya/KEN-50/1950) (ASFV).